Consider the following 279-residue polypeptide: Arabinooligosaccharides transport system permease protein AraQ (279 aa).

6 helical membrane passes run isoleucine 8–leucine 28, valine 79–alanine 99, phenylalanine 110–leucine 130, valine 140–phenylalanine 160, glycine 184–leucine 204, and isoleucine 245–glutamine 265. Residues phenylalanine 75 to phenylalanine 264 enclose the ABC transmembrane type-1 domain.

It belongs to the binding-protein-dependent transport system permease family. MalFG subfamily. The complex is composed of two ATP-binding proteins (MsmX), two transmembrane proteins (AraP and AraQ) and a solute-binding protein (AraN).

The protein localises to the cell membrane. In terms of biological role, part of the ABC transporter complex AraNPQ involved in the uptake of arabinooligosaccharides. Responsible for the translocation of the substrate across the membrane. This Halalkalibacterium halodurans (strain ATCC BAA-125 / DSM 18197 / FERM 7344 / JCM 9153 / C-125) (Bacillus halodurans) protein is Arabinooligosaccharides transport system permease protein AraQ (araQ).